We begin with the raw amino-acid sequence, 166 residues long: Phosphopantetheine adenylyltransferase (166 aa).

Residue Thr-9 coordinates substrate. Residues 9–10 and His-17 contribute to the ATP site; that span reads TF. Residues Lys-41, Leu-78, and Arg-92 each contribute to the substrate site. Residues 93-95, Glu-103, and 128-134 contribute to the ATP site; these read GLR and HQAIASK.

The protein belongs to the bacterial CoaD family. In terms of assembly, homohexamer. The cofactor is Mg(2+).

It is found in the cytoplasm. It carries out the reaction (R)-4'-phosphopantetheine + ATP + H(+) = 3'-dephospho-CoA + diphosphate. It participates in cofactor biosynthesis; coenzyme A biosynthesis; CoA from (R)-pantothenate: step 4/5. In terms of biological role, reversibly transfers an adenylyl group from ATP to 4'-phosphopantetheine, yielding dephospho-CoA (dPCoA) and pyrophosphate. The sequence is that of Phosphopantetheine adenylyltransferase from Roseobacter denitrificans (strain ATCC 33942 / OCh 114) (Erythrobacter sp. (strain OCh 114)).